Here is a 338-residue protein sequence, read N- to C-terminus: Probable tRNA pseudouridine synthase B (338 aa).

Asp82 acts as the Nucleophile in catalysis. A PUA domain is found at 250–325 (LPKVWIRDSA…IAVDVDKVFM (76 aa)).

Belongs to the pseudouridine synthase TruB family. Type 2 subfamily.

It catalyses the reaction uridine(55) in tRNA = pseudouridine(55) in tRNA. In terms of biological role, could be responsible for synthesis of pseudouridine from uracil-55 in the psi GC loop of transfer RNAs. The chain is Probable tRNA pseudouridine synthase B from Thermococcus kodakarensis (strain ATCC BAA-918 / JCM 12380 / KOD1) (Pyrococcus kodakaraensis (strain KOD1)).